Reading from the N-terminus, the 435-residue chain is Light-independent protochlorophyllide reductase subunit N (435 aa).

Residues Cys23, Cys48, and Cys108 each coordinate [4Fe-4S] cluster.

It belongs to the BchN/ChlN family. In terms of assembly, protochlorophyllide reductase is composed of three subunits; ChlL, ChlN and ChlB. Forms a heterotetramer of two ChlB and two ChlN subunits. Requires [4Fe-4S] cluster as cofactor.

Its subcellular location is the plastid. The protein localises to the chloroplast. It catalyses the reaction chlorophyllide a + oxidized 2[4Fe-4S]-[ferredoxin] + 2 ADP + 2 phosphate = protochlorophyllide a + reduced 2[4Fe-4S]-[ferredoxin] + 2 ATP + 2 H2O. Its pathway is porphyrin-containing compound metabolism; chlorophyll biosynthesis (light-independent). Functionally, component of the dark-operative protochlorophyllide reductase (DPOR) that uses Mg-ATP and reduced ferredoxin to reduce ring D of protochlorophyllide (Pchlide) to form chlorophyllide a (Chlide). This reaction is light-independent. The NB-protein (ChlN-ChlB) is the catalytic component of the complex. The chain is Light-independent protochlorophyllide reductase subunit N from Chlorella vulgaris (Green alga).